Consider the following 313-residue polypeptide: E3 ubiquitin-protein ligase siah2 (313 aa).

Residues 1 to 49 (MSRPSSAGPCASKPCGKQKQPPPPPPHAPSLPATISGGPGASAPPAPTA) form a disordered region. Positions 20 to 29 (QPPPPPPHAP) are enriched in pro residues. An RING-type zinc finger spans residues 69 to 104 (CPVCFDYVLPPILQCQAGHLVCNQCRQKLSCCPTCR). An SBD region spans residues 119-311 (VASAVLFPCK…LGINVTISTC (193 aa)). An SIAH-type zinc finger spans residues 122–182 (AVLFPCKYAS…VMQHLTHSHK (61 aa)). Residues Cys-127, Cys-134, His-146, Cys-150, Cys-157, Cys-164, His-176, and His-181 each coordinate Zn(2+).

Belongs to the SINA (Seven in absentia) family. As to quaternary structure, homodimer. As to expression, widely expressed in early embryos until stage 40. It is then expressed in brain, spinal cord and in the developing and mature eye.

The protein localises to the cytoplasm. It catalyses the reaction S-ubiquitinyl-[E2 ubiquitin-conjugating enzyme]-L-cysteine + [acceptor protein]-L-lysine = [E2 ubiquitin-conjugating enzyme]-L-cysteine + N(6)-ubiquitinyl-[acceptor protein]-L-lysine.. The protein operates within protein modification; protein ubiquitination. In terms of biological role, E3 ubiquitin-protein ligase that mediates ubiquitination and subsequent proteasomal degradation of target proteins. E3 ubiquitin ligases accept ubiquitin from an E2 ubiquitin-conjugating enzyme in the form of a thioester and then directly transfers the ubiquitin to targeted substrates. Involved in eye morphogenesis, probably triggers the ubiquitin-mediated degradation of different substrates. May play a role in the regulation of the cellular clock function. This Xenopus laevis (African clawed frog) protein is E3 ubiquitin-protein ligase siah2 (siah2).